A 345-amino-acid chain; its full sequence is Methionine import ATP-binding protein MetN (345 aa).

Residues 2–241 (IKLKNISKIF…PKTELAQEFI (240 aa)) enclose the ABC transporter domain. An ATP-binding site is contributed by 38–45 (GASGAGKS).

The protein belongs to the ABC transporter superfamily. Methionine importer (TC 3.A.1.24) family. As to quaternary structure, the complex is composed of two ATP-binding proteins (MetN), two transmembrane proteins (MetI) and a solute-binding protein (MetQ).

It localises to the cell inner membrane. The enzyme catalyses L-methionine(out) + ATP + H2O = L-methionine(in) + ADP + phosphate + H(+). It carries out the reaction D-methionine(out) + ATP + H2O = D-methionine(in) + ADP + phosphate + H(+). Its function is as follows. Part of the ABC transporter complex MetNIQ involved in methionine import. Responsible for energy coupling to the transport system. In Mannheimia succiniciproducens (strain KCTC 0769BP / MBEL55E), this protein is Methionine import ATP-binding protein MetN.